Here is a 155-residue protein sequence, read N- to C-terminus: Fibroblast growth factor 2 (155 aa).

The propeptide occupies 1–9; sequence MAAGSITTL. Polar residues predominate over residues 1-11; it reads MAAGSITTLPT. The disordered stretch occupies residues 1–24; that stretch reads MAAGSITTLPTESEDGGNTPFSPG. Residues 27-31 and 116-119 each bind heparin; these read KDPKR and RSRK.

The protein belongs to the heparin-binding growth factors family.

The protein resides in the secreted. It localises to the nucleus. Functionally, acts as a ligand for FGFR1, FGFR2, FGFR3 and FGFR4. Also acts as an integrin ligand which is required for FGF2 signaling. Plays an important role in the regulation of cell survival, cell division, cell differentiation and cell migration. Functions as a potent mitogen in vitro. Can induce angiogenesis. This chain is Fibroblast growth factor 2 (fgf2), found in Xenopus laevis (African clawed frog).